The sequence spans 511 residues: 2'-acyl-2-O-sulfo-trehalose (hydroxy)phthioceranyltransferase PapA1 (511 aa).

Belongs to the PapA acyltransferase family.

It carries out the reaction a (hydroxy)phthioceranyl-[(hydroxy)phthioceranic acid synthase] + 2'-palmitoyl/stearoyl-2-O-sulfo-alpha,alpha-trehalose = a 3'-(hydroxy)phthioceranyl-2'-palmitoyl/stearoyl-2-O-sulfo-alpha,alpha-trehalose + holo-[(hydroxy)phthioceranic acid synthase].. In terms of biological role, catalyzes the acylation of trehalose-2-sulfate-2'-palmitate (SL659) by adding the (hydroxy)phthioceranoyl group at the 3'-position to yield the diacylated intermediate 2-palmitoyl-3-(C43)-phthioceranyl-alpha, alpha'-D-trehalose-2'-sulfate (SL1278). The protein is 2'-acyl-2-O-sulfo-trehalose (hydroxy)phthioceranyltransferase PapA1 (papA1) of Mycobacterium bovis (strain BCG / Pasteur 1173P2).